We begin with the raw amino-acid sequence, 109 residues long: Probable WRKY transcription factor 43 (109 aa).

Residues 24 to 89 constitute a DNA-binding region (WRKY); that stretch reads SDADILDDGY…YEGIHNHPCE (66 aa).

Belongs to the WRKY group II-c family.

It is found in the nucleus. In terms of biological role, transcription factor. Interacts specifically with the W box (5'-(T)TGAC[CT]-3'), a frequently occurring elicitor-responsive cis-acting element. The sequence is that of Probable WRKY transcription factor 43 (WRKY43) from Arabidopsis thaliana (Mouse-ear cress).